We begin with the raw amino-acid sequence, 299 residues long: Oxygen-dependent coproporphyrinogen-III oxidase (299 aa).

Serine 92 lines the substrate pocket. Histidine 96 and histidine 106 together coordinate Mn(2+). The active-site Proton donor is the histidine 106. Position 108-110 (108-110) interacts with substrate; sequence NVR. Residues histidine 145 and histidine 175 each contribute to the Mn(2+) site. The segment at 240-275 is important for dimerization; it reads YVEFNLVWDRGTLFGLQTGGRTESILMSMPPLVRWE. Residue 258–260 coordinates substrate; the sequence is GGR.

Belongs to the aerobic coproporphyrinogen-III oxidase family. Homodimer. The cofactor is Mn(2+).

The protein localises to the cytoplasm. It catalyses the reaction coproporphyrinogen III + O2 + 2 H(+) = protoporphyrinogen IX + 2 CO2 + 2 H2O. It functions in the pathway porphyrin-containing compound metabolism; protoporphyrin-IX biosynthesis; protoporphyrinogen-IX from coproporphyrinogen-III (O2 route): step 1/1. In terms of biological role, involved in the heme biosynthesis. Catalyzes the aerobic oxidative decarboxylation of propionate groups of rings A and B of coproporphyrinogen-III to yield the vinyl groups in protoporphyrinogen-IX. The protein is Oxygen-dependent coproporphyrinogen-III oxidase of Escherichia coli O127:H6 (strain E2348/69 / EPEC).